A 332-amino-acid polypeptide reads, in one-letter code: Glycerol-3-phosphate dehydrogenase [NAD(P)+] (332 aa).

3 residues coordinate NADPH: tryptophan 11, arginine 30, and lysine 108. Lysine 108, glycine 137, and serine 139 together coordinate sn-glycerol 3-phosphate. Position 141 (alanine 141) interacts with NADPH. The sn-glycerol 3-phosphate site is built by lysine 192, aspartate 245, serine 255, arginine 256, and asparagine 257. Catalysis depends on lysine 192, which acts as the Proton acceptor. Residue arginine 256 coordinates NADPH. NADPH is bound by residues valine 280 and glutamate 282.

Belongs to the NAD-dependent glycerol-3-phosphate dehydrogenase family.

Its subcellular location is the cytoplasm. It catalyses the reaction sn-glycerol 3-phosphate + NAD(+) = dihydroxyacetone phosphate + NADH + H(+). The catalysed reaction is sn-glycerol 3-phosphate + NADP(+) = dihydroxyacetone phosphate + NADPH + H(+). The protein operates within membrane lipid metabolism; glycerophospholipid metabolism. Its function is as follows. Catalyzes the reduction of the glycolytic intermediate dihydroxyacetone phosphate (DHAP) to sn-glycerol 3-phosphate (G3P), the key precursor for phospholipid synthesis. The chain is Glycerol-3-phosphate dehydrogenase [NAD(P)+] from Burkholderia vietnamiensis (strain G4 / LMG 22486) (Burkholderia cepacia (strain R1808)).